Reading from the N-terminus, the 310-residue chain is Homoserine kinase (310 aa).

91–101 (PIGSGLGSSAC) contributes to the ATP binding site.

Belongs to the GHMP kinase family. Homoserine kinase subfamily.

It is found in the cytoplasm. It carries out the reaction L-homoserine + ATP = O-phospho-L-homoserine + ADP + H(+). It functions in the pathway amino-acid biosynthesis; L-threonine biosynthesis; L-threonine from L-aspartate: step 4/5. In terms of biological role, catalyzes the ATP-dependent phosphorylation of L-homoserine to L-homoserine phosphate. The chain is Homoserine kinase from Escherichia coli O17:K52:H18 (strain UMN026 / ExPEC).